The sequence spans 598 residues: Mitogen-activated protein kinase 19 (598 aa).

In terms of domain architecture, Protein kinase spans Tyr-25–Phe-316. Residues Ile-31–Val-39 and Lys-54 each bind ATP. Catalysis depends on Asp-151, which acts as the Proton acceptor. Thr-187 is modified (phosphothreonine). Positions Thr-187–Tyr-189 match the TXY motif. Tyr-189 is modified (phosphotyrosine). At Thr-192 the chain carries Phosphothreonine. The tract at residues Gly-396–Lys-486 is disordered. The span at Ser-414–Ala-425 shows a compositional bias: low complexity.

Belongs to the protein kinase superfamily. CMGC Ser/Thr protein kinase family. MAP kinase subfamily. Dually phosphorylated on Thr-187 and Tyr-189, which activates the enzyme.

The catalysed reaction is L-seryl-[protein] + ATP = O-phospho-L-seryl-[protein] + ADP + H(+). The enzyme catalyses L-threonyl-[protein] + ATP = O-phospho-L-threonyl-[protein] + ADP + H(+). Its activity is regulated as follows. Activated by threonine and tyrosine phosphorylation. In Arabidopsis thaliana (Mouse-ear cress), this protein is Mitogen-activated protein kinase 19 (MPK19).